A 475-amino-acid polypeptide reads, in one-letter code: UDP-N-acetylmuramate--L-alanine ligase (475 aa).

112-118 is an ATP binding site; that stretch reads GTHGKTT.

This sequence belongs to the MurCDEF family.

The protein resides in the cytoplasm. The enzyme catalyses UDP-N-acetyl-alpha-D-muramate + L-alanine + ATP = UDP-N-acetyl-alpha-D-muramoyl-L-alanine + ADP + phosphate + H(+). It functions in the pathway cell wall biogenesis; peptidoglycan biosynthesis. In terms of biological role, cell wall formation. The chain is UDP-N-acetylmuramate--L-alanine ligase from Paracidovorax citrulli (strain AAC00-1) (Acidovorax citrulli).